The sequence spans 500 residues: Protein nucleotidyltransferase YdiU (500 aa).

G96, G98, R99, K119, D131, G132, R182, and R189 together coordinate ATP. The Proton acceptor role is filled by D258. Mg(2+) contacts are provided by N259 and D268. Position 268 (D268) interacts with ATP.

This sequence belongs to the SELO family. The cofactor is Mg(2+). Mn(2+) serves as cofactor.

The enzyme catalyses L-seryl-[protein] + ATP = 3-O-(5'-adenylyl)-L-seryl-[protein] + diphosphate. The catalysed reaction is L-threonyl-[protein] + ATP = 3-O-(5'-adenylyl)-L-threonyl-[protein] + diphosphate. It carries out the reaction L-tyrosyl-[protein] + ATP = O-(5'-adenylyl)-L-tyrosyl-[protein] + diphosphate. It catalyses the reaction L-histidyl-[protein] + UTP = N(tele)-(5'-uridylyl)-L-histidyl-[protein] + diphosphate. The enzyme catalyses L-seryl-[protein] + UTP = O-(5'-uridylyl)-L-seryl-[protein] + diphosphate. The catalysed reaction is L-tyrosyl-[protein] + UTP = O-(5'-uridylyl)-L-tyrosyl-[protein] + diphosphate. Functionally, nucleotidyltransferase involved in the post-translational modification of proteins. It can catalyze the addition of adenosine monophosphate (AMP) or uridine monophosphate (UMP) to a protein, resulting in modifications known as AMPylation and UMPylation. This Rhizobium leguminosarum bv. trifolii (strain WSM2304) protein is Protein nucleotidyltransferase YdiU.